The primary structure comprises 178 residues: Caveolin-1 (178 aa).

S2 is subject to N-acetylserine. At S2 the chain carries Phosphoserine. The segment at 2–94 (SGGKYVDSEG…WKASFTTFTV (93 aa)) is required for homooligomerization. Residues 2-104 (SGGKYVDSEG…TKYWFYRLLS (103 aa)) lie on the Cytoplasmic side of the membrane. N6-acetyllysine; alternate is present on K5. K5 is covalently cross-linked (Glycyl lysine isopeptide (Lys-Gly) (interchain with G-Cter in ubiquitin); alternate). Residue Y6 is modified to Phosphotyrosine. Residue S9 is modified to Phosphoserine. Y14 carries the phosphotyrosine; by ABL1 and INSR modification. Y25 is modified (phosphotyrosine). Glycyl lysine isopeptide (Lys-Gly) (interchain with G-Cter in ubiquitin) cross-links involve residues K26, K30, K39, K47, and K57. The segment at 82-94 (DGIWKASFTTFTV) is interaction with CAVIN3. Residues 105–125 (TIFGIPMALIWGIYFAILSFL) constitute an intramembrane region (helical). The Cytoplasmic segment spans residues 126 to 178 (HIWAVVPCIKSFLIEIQCISRVYSIYVHTFCDPLFEAIGKIFSNIRISTQKEI). The segment at 131-142 (VPCIKSFLIEIQ) is interacts with SPRY1, SPRY2, SPRY3 and SPRY4. Residues C133, C143, and C156 are each lipidated (S-palmitoyl cysteine). An interacts with SPRY1, SPRY2, and SPRY4 region spans residues 149–160 (SIYVHTFCDPLF). The tract at residues 167–178 (FSNIRISTQKEI) is interacts with SPRY1, SPRY2, SPRY3 and SPRY4.

The protein belongs to the caveolin family. As to quaternary structure, homooligomer. Interacts (via the N-terminus) with DPP4; the interaction is direct. Forms a stable heterooligomeric complex with CAV2 that targets to lipid rafts and drives caveolae formation. Interacts with BMX, BTK, CTNNB1, CDH1, GLIPR2, JUP, NOSTRIN, SNAP25 and STX1A. Interacts with SLC7A9. Interacts with TGFBR1. Interacts with CTNNB1, CDH1 and JUP. Interacts with PACSIN2; this interaction induces membrane tubulation. Interacts with CAVIN3 (via leucine-zipper domain) in a cholesterol-sensitive manner. Interacts with EHD2 in a cholesterol-dependent manner. Interacts with CAVIN1. Forms a ternary complex with UBXN6 and VCP; mediates CAV1 targeting to lysosomes for degradation. Interacts with ABCG1; this interaction regulates ABCG1-mediated cholesterol efflux. Interacts with NEU3; this interaction enhances NEU3 sialidase activity within caveola. Interacts (via C-terminus) with SPRY1, SPRY2 (via C-terminus), SPRY3, and SPRY4. Interacts with IGFBP5; this interaction allows trafficking of IGFBP5 from the plasma membrane to the nucleus. The N-terminus of both isoforms are blocked. Post-translationally, phosphorylated at Tyr-14 by ABL1 in response to oxidative stress. In terms of processing, ubiquitinated. Undergo monoubiquitination and multi- and/or polyubiquitination. Monoubiquitination of N-terminal lysines promotes integration in a ternary complex with UBXN6 and VCP which promotes oligomeric CAV1 targeting to lysosomes for degradation. Ubiquitinated by ZNRF1; leading to degradation and modulation of the TLR4-mediated immune response. Adipose tissue, lung, heart, skeletal muscle, stomach, small bowel, kidney, spleen and testis (at protein level).

The protein localises to the golgi apparatus membrane. The protein resides in the cell membrane. It is found in the membrane. It localises to the caveola. Its subcellular location is the membrane raft. The protein localises to the golgi apparatus. The protein resides in the trans-Golgi network. Functionally, may act as a scaffolding protein within caveolar membranes. Forms a stable heterooligomeric complex with CAV2 that targets to lipid rafts and drives caveolae formation. Mediates the recruitment of CAVIN proteins (CAVIN1/2/3/4) to the caveolae. Interacts directly with G-protein alpha subunits and can functionally regulate their activity. Involved in the costimulatory signal essential for T-cell receptor (TCR)-mediated T-cell activation. Its binding to DPP4 induces T-cell proliferation and NF-kappa-B activation in a T-cell receptor/CD3-dependent manner. Recruits CTNNB1 to caveolar membranes and may regulate CTNNB1-mediated signaling through the Wnt pathway. Negatively regulates TGFB1-mediated activation of SMAD2/3 by mediating the internalization of TGFBR1 from membrane rafts leading to its subsequent degradation. Binds 20(S)-hydroxycholesterol (20(S)-OHC). The polypeptide is Caveolin-1 (Cav1) (Mus musculus (Mouse)).